The chain runs to 245 residues: 1-(5-phosphoribosyl)-5-[(5-phosphoribosylamino)methylideneamino] imidazole-4-carboxamide isomerase (245 aa).

D7 serves as the catalytic Proton acceptor. D129 serves as the catalytic Proton donor.

Belongs to the HisA/HisF family.

Its subcellular location is the cytoplasm. It carries out the reaction 1-(5-phospho-beta-D-ribosyl)-5-[(5-phospho-beta-D-ribosylamino)methylideneamino]imidazole-4-carboxamide = 5-[(5-phospho-1-deoxy-D-ribulos-1-ylimino)methylamino]-1-(5-phospho-beta-D-ribosyl)imidazole-4-carboxamide. It participates in amino-acid biosynthesis; L-histidine biosynthesis; L-histidine from 5-phospho-alpha-D-ribose 1-diphosphate: step 4/9. The polypeptide is 1-(5-phosphoribosyl)-5-[(5-phosphoribosylamino)methylideneamino] imidazole-4-carboxamide isomerase (Shewanella sp. (strain MR-7)).